The chain runs to 211 residues: Large ribosomal subunit protein uL3 (211 aa).

The protein belongs to the universal ribosomal protein uL3 family. In terms of assembly, part of the 50S ribosomal subunit. Forms a cluster with proteins L14 and L19.

In terms of biological role, one of the primary rRNA binding proteins, it binds directly near the 3'-end of the 23S rRNA, where it nucleates assembly of the 50S subunit. This chain is Large ribosomal subunit protein uL3, found in Citrifermentans bemidjiense (strain ATCC BAA-1014 / DSM 16622 / JCM 12645 / Bem) (Geobacter bemidjiensis).